The sequence spans 515 residues: ATP-dependent RNA helicase DBP3 (515 aa).

The disordered stretch occupies residues 1–67 (MAKRPLQTEA…SDSRYLPTPE (67 aa)). The short motif at 100-127 (TSFSFLPESSNDLYLPLEKFSSPTPIQA) is the Q motif element. Residues 130–306 (WPLAFAGRDL…ASFTKNPVTV (177 aa)) enclose the Helicase ATP-binding domain. 143–150 (AETGSGKT) serves as a coordination point for ATP. Positions 252 to 255 (DEAD) match the DEAD box motif. The Helicase C-terminal domain maps to 335 to 484 (RLLELLRRYQ…DVPESLLKFG (150 aa)).

Belongs to the DEAD box helicase family. DDX5/DBP2 subfamily.

The protein resides in the nucleus. It localises to the nucleolus. The catalysed reaction is ATP + H2O = ADP + phosphate + H(+). In terms of biological role, ATP-dependent RNA helicase required for 60S ribosomal subunit synthesis. Involved in efficient pre-rRNA processing, predominantly at site A3, which is necessary for the normal formation of 25S and 5.8S rRNAs. The chain is ATP-dependent RNA helicase DBP3 (DBP3) from Coccidioides immitis (strain RS) (Valley fever fungus).